The following is a 286-amino-acid chain: ATP synthase gamma chain (286 aa).

Belongs to the ATPase gamma chain family. F-type ATPases have 2 components, CF(1) - the catalytic core - and CF(0) - the membrane proton channel. CF(1) has five subunits: alpha(3), beta(3), gamma(1), delta(1), epsilon(1). CF(0) has three main subunits: a, b and c.

The protein localises to the cell inner membrane. Its function is as follows. Produces ATP from ADP in the presence of a proton gradient across the membrane. The gamma chain is believed to be important in regulating ATPase activity and the flow of protons through the CF(0) complex. This Pseudomonas aeruginosa (strain UCBPP-PA14) protein is ATP synthase gamma chain.